The sequence spans 353 residues: MTIALGRFTKEENDLFDIMDDWLRRDRFVFVGWSGLLLFPCAYFALGGWFTGTTFVTSWYTHGLASSYLEGCNFLTAAVSTPANSLAHSLLLLWGPEAQGDFTRWCQLGGLWTFVALHGAFGLIGFMLRQFELARSVQLRPYNAIAFSAPIAVFVSVFLIYPLGQSGWFFAPSFGVAAIFRFILFFQGFHNWTLNPFHMMGVAGVLGAALLCAIHGATVENTLFEDGDGANTFRAFNPTQAEETYSMVTANRFWSQIFGVAFSNKRWLHFFMLFVPVTGLWMSAIGVVGLALNLRAYDFVSQEIRAAEDPEFETFYTKNILLNEGIRAWMAAQDQPHENLIFPEEVLPRGNAL.

Position 2 is an N-acetylthreonine (threonine 2). Threonine 2 carries the phosphothreonine modification. Residues 41-61 (CAYFALGGWFTGTTFVTSWYT) form a helical membrane-spanning segment. Histidine 118 contributes to the chlorophyll a binding site. The chain crosses the membrane as a helical span at residues 125 to 141 (GFMLRQFELARSVQLRP). Pheophytin a contacts are provided by glutamine 130 and asparagine 143. The chain crosses the membrane as a helical span at residues 153–166 (VFVSVFLIYPLGQS). Chlorophyll a is bound at residue histidine 198. Residues 208 to 228 (AALLCAIHGATVENTLFEDGD) traverse the membrane as a helical segment. 2 residues coordinate a plastoquinone: histidine 215 and phenylalanine 262. Histidine 215 lines the Fe cation pocket. Histidine 269 is a Fe cation binding site. A helical membrane pass occupies residues 279–295 (GLWMSAIGVVGLALNLR).

It belongs to the reaction center PufL/M/PsbA/D family. In terms of assembly, PSII is composed of 1 copy each of membrane proteins PsbA, PsbB, PsbC, PsbD, PsbE, PsbF, PsbH, PsbI, PsbJ, PsbK, PsbL, PsbM, PsbT, PsbX, PsbY, PsbZ, Psb30/Ycf12, at least 3 peripheral proteins of the oxygen-evolving complex and a large number of cofactors. It forms dimeric complexes. The D1/D2 heterodimer binds P680, chlorophylls that are the primary electron donor of PSII, and subsequent electron acceptors. It shares a non-heme iron and each subunit binds pheophytin, quinone, additional chlorophylls, carotenoids and lipids. There is also a Cl(-1) ion associated with D1 and D2, which is required for oxygen evolution. The PSII complex binds additional chlorophylls, carotenoids and specific lipids. is required as a cofactor.

The protein resides in the plastid. It localises to the chloroplast thylakoid membrane. It catalyses the reaction 2 a plastoquinone + 4 hnu + 2 H2O = 2 a plastoquinol + O2. Functionally, photosystem II (PSII) is a light-driven water:plastoquinone oxidoreductase that uses light energy to abstract electrons from H(2)O, generating O(2) and a proton gradient subsequently used for ATP formation. It consists of a core antenna complex that captures photons, and an electron transfer chain that converts photonic excitation into a charge separation. The D1/D2 (PsbA/PsbD) reaction center heterodimer binds P680, the primary electron donor of PSII as well as several subsequent electron acceptors. D2 is needed for assembly of a stable PSII complex. The chain is Photosystem II D2 protein from Liriodendron tulipifera (Tuliptree).